The sequence spans 445 residues: Probable histidine--tRNA ligase, cytoplasmic (445 aa).

This sequence belongs to the class-II aminoacyl-tRNA synthetase family.

Its subcellular location is the cytoplasm. The enzyme catalyses tRNA(His) + L-histidine + ATP = L-histidyl-tRNA(His) + AMP + diphosphate + H(+). The sequence is that of Probable histidine--tRNA ligase, cytoplasmic from Antonospora locustae (Microsporidian parasite).